Consider the following 472-residue polypeptide: MERSRQVYYIINEYLGRHPSSTEYQVLKHQVEKISKINNFNKETFFFLLKKNKNKFFKDLELSDDLLKKRIDEYFSKQKHAKRLGNLFAIMELQKILISSFTKTIGILTTKVPEYYHSTIKLEYSSMEKIADDILDSYNVVEPSKEVKGRHKVSDLVGHVYKIMEEYLRRHSNSCLCYGSYSLHFLNNKIEYGDIDVLQTNARTFLINIAFLIKFITGRRIVLLKVPFLKNYVIMHDEETNHVMDTFNIREKTMNMIPKIMIDNMYIVDPCIQLLNMIKMLSQIDRLEELQAKFEKLSVRLGTLLEYTRYRYSIPLDSESILEVRAKLDKDKRKITVDFKKYKLNYIKCYFYLDEVELKKFISKNSGLDEYEDFEAVTNSEYAIRNKTMYTYFSNTALMRSENEIHPITINALTSHALLYHVITRKFYDDLLGDLVRSLMIVEKVPVFKIIPRDKKQGRHTIIDIEKDIIFH.

Active-site residues include aspartate 194 and aspartate 196.

Belongs to the poxviridae poly(A) polymerase catalytic subunit family. Heterodimer of a large (catalytic) subunit and a small (regulatory) subunit.

It catalyses the reaction RNA(n) + ATP = RNA(n)-3'-adenine ribonucleotide + diphosphate. In terms of biological role, polymerase that creates the 3'-poly(A) tail of mRNA's. This chain is Poly(A) polymerase catalytic subunit (PAPL), found in Fowlpox virus (strain NVSL) (FPV).